The sequence spans 98 residues: Cystatin-B (98 aa).

Position 1 is an N-acetylmethionine (methionine 1). The Secondary area of contact signature appears at glutamine 46–glycine 50.

It belongs to the cystatin family. As to quaternary structure, able to form dimers stabilized by noncovalent forces.

It is found in the cytoplasm. The protein localises to the nucleus. Functionally, this is an intracellular thiol proteinase inhibitor. Tightly binding reversible inhibitor of cathepsins L, H and B. This is Cystatin-B (CSTB) from Pan troglodytes (Chimpanzee).